A 376-amino-acid chain; its full sequence is WW domain-binding protein 4 (376 aa).

The segment at 11 to 42 (KFCDYCKCWIADNRPSVEFHERGKNHKENVAK) adopts a Matrin-type zinc-finger fold. Positions 94-107 (ITPVTSTIPPTSTS) are enriched in low complexity. Disordered stretches follow at residues 94 to 128 (ITPVTSTIPPTSTSNQQKEKKEKKKRKKDPSKGRW), 189 to 335 (SRWE…EPKV), and 356 to 376 (FKKRRTENGKSRNLRQRGDDQ). 2 WW domains span residues 122 to 155 (DPSKGRWVEGITSEGYHYYYDLISGASQWEKPEG) and 163 to 196 (TAVKTVWVEGLSEDGFTYYYNTETGESRWEKPDD). Residues 189 to 198 (SRWEKPDDFI) are compositionally biased toward basic and acidic residues. Residues 203 to 215 (DLPSSKVNENSLG) show a composition bias toward polar residues. Basic and acidic residues-rich tracts occupy residues 218 to 229 (DESKSSDSHSDS) and 243 to 257 (ETEKPKIKFKEKNKN). Ser220, Ser227, and Ser229 each carry phosphoserine. Ser262 carries the phosphoserine modification. Over residues 298–309 (QEIKQEVESHEE) the composition is skewed to basic and acidic residues. Residues 316-326 (STENEYVSTSE) show a composition bias toward polar residues. The interaction with SNRNP200 stretch occupies residues 357 to 375 (KKRRTENGKSRNLRQRGDD). Residues 361-376 (TENGKSRNLRQRGDDQ) show a composition bias toward basic and acidic residues.

In terms of assembly, component of the spliceosome B complex. Associated with U2 snRNPs. Binds splicing factors SNRPB, SNRPC and SF1. Interacts via the WW domains with the Pro-rich domains of KHDRBS1/SAM68. Interacts via the WW domains with the Pro-rich domains of WBP11. Interacts with SNRNP200.

Its subcellular location is the nucleus. It is found in the nucleus speckle. Functionally, involved in pre-mRNA splicing as a component of the spliceosome. May play a role in cross-intron bridging of U1 and U2 snRNPs in the mammalian A complex. The sequence is that of WW domain-binding protein 4 (WBP4) from Homo sapiens (Human).